The primary structure comprises 356 residues: Phospho-N-acetylmuramoyl-pentapeptide-transferase (356 aa).

The next 9 helical transmembrane spans lie at 27–47, 74–94, 97–117, 128–148, 164–184, 201–221, 241–261, 284–304, and 333–353; these read AAAI…IGWM, MGGL…MDFA, YVWA…IDDY, VSGK…CYLI, PVID…VGTA, VIIA…AVFA, AIIG…AIFM, IVLG…IIQV, and TVVI…LATL.

Belongs to the glycosyltransferase 4 family. MraY subfamily. The cofactor is Mg(2+).

The protein localises to the cell inner membrane. The catalysed reaction is UDP-N-acetyl-alpha-D-muramoyl-L-alanyl-gamma-D-glutamyl-meso-2,6-diaminopimeloyl-D-alanyl-D-alanine + di-trans,octa-cis-undecaprenyl phosphate = di-trans,octa-cis-undecaprenyl diphospho-N-acetyl-alpha-D-muramoyl-L-alanyl-D-glutamyl-meso-2,6-diaminopimeloyl-D-alanyl-D-alanine + UMP. Its pathway is cell wall biogenesis; peptidoglycan biosynthesis. Its function is as follows. Catalyzes the initial step of the lipid cycle reactions in the biosynthesis of the cell wall peptidoglycan: transfers peptidoglycan precursor phospho-MurNAc-pentapeptide from UDP-MurNAc-pentapeptide onto the lipid carrier undecaprenyl phosphate, yielding undecaprenyl-pyrophosphoryl-MurNAc-pentapeptide, known as lipid I. The chain is Phospho-N-acetylmuramoyl-pentapeptide-transferase from Zymomonas mobilis subsp. mobilis (strain ATCC 31821 / ZM4 / CP4).